Reading from the N-terminus, the 233-residue chain is Ribulose-phosphate 3-epimerase (233 aa).

Serine 16 lines the substrate pocket. A divalent metal cation-binding residues include histidine 41, aspartate 43, and histidine 74. Catalysis depends on aspartate 43, which acts as the Proton acceptor. Residues histidine 74, 150-153 (GFCG), 185-187 (DGG), and 207-208 (AS) each bind substrate. Aspartate 185 contacts a divalent metal cation. Aspartate 185 acts as the Proton donor in catalysis.

This sequence belongs to the ribulose-phosphate 3-epimerase family. Requires a divalent metal cation as cofactor.

It catalyses the reaction D-ribulose 5-phosphate = D-xylulose 5-phosphate. It participates in carbohydrate degradation. Functionally, catalyzes the reversible epimerization of D-ribulose 5-phosphate to D-xylulose 5-phosphate. This is Ribulose-phosphate 3-epimerase from Chlamydia trachomatis serovar D (strain ATCC VR-885 / DSM 19411 / UW-3/Cx).